Consider the following 88-residue polypeptide: Small ribosomal subunit protein uS15 (88 aa).

Belongs to the universal ribosomal protein uS15 family. In terms of assembly, part of the 30S ribosomal subunit. Forms a bridge to the 50S subunit in the 70S ribosome, contacting the 23S rRNA.

Its function is as follows. One of the primary rRNA binding proteins, it binds directly to 16S rRNA where it helps nucleate assembly of the platform of the 30S subunit by binding and bridging several RNA helices of the 16S rRNA. Functionally, forms an intersubunit bridge (bridge B4) with the 23S rRNA of the 50S subunit in the ribosome. This Trichlorobacter lovleyi (strain ATCC BAA-1151 / DSM 17278 / SZ) (Geobacter lovleyi) protein is Small ribosomal subunit protein uS15.